A 610-amino-acid chain; its full sequence is UvrABC system protein C (610 aa).

Residues 16–94 (SQPGVYRMYD…IQRYQPRYNV (79 aa)) form the GIY-YIG domain. In terms of domain architecture, UVR spans 204-239 (SQVIEGLIKRMEEASQALRFEEAARIRDQIHAVRQV).

Belongs to the UvrC family. Interacts with UvrB in an incision complex.

It is found in the cytoplasm. The UvrABC repair system catalyzes the recognition and processing of DNA lesions. UvrC both incises the 5' and 3' sides of the lesion. The N-terminal half is responsible for the 3' incision and the C-terminal half is responsible for the 5' incision. This Proteus mirabilis (strain HI4320) protein is UvrABC system protein C.